The sequence spans 248 residues: Probable transcriptional regulatory protein Rsph17025_0577 (248 aa).

The segment at 1–21 is disordered; it reads MAGHSKWANIQHRKGKQDKLR.

Belongs to the TACO1 family.

The protein localises to the cytoplasm. In Cereibacter sphaeroides (strain ATCC 17025 / ATH 2.4.3) (Rhodobacter sphaeroides), this protein is Probable transcriptional regulatory protein Rsph17025_0577.